A 443-amino-acid chain; its full sequence is Toxin YjjJ (443 aa).

The active-site Proton acceptor is Asp-342.

Belongs to the HipA Ser/Thr kinase family.

In terms of biological role, toxic when overexpressed in E.coli, leading to long filamentous cells. The toxic effect is neutralized by non-cognate antitoxin HipB. Does not seem to inhibit DNA, RNA or protein synthesis, and unlike paralogous toxin HipA its toxic activity is not counteracted by overexpression of GltX. Binds DNA. Might be a protein kinase. This is Toxin YjjJ (yjjJ) from Escherichia coli (strain K12).